The following is a 198-amino-acid chain: Outer-membrane lipoprotein carrier protein (198 aa).

Positions 1 to 17 (MKKFLFSLCLLSSTVLA) are cleaved as a signal peptide.

This sequence belongs to the LolA family. As to quaternary structure, monomer.

Its subcellular location is the periplasm. Functionally, participates in the translocation of lipoproteins from the inner membrane to the outer membrane. Only forms a complex with a lipoprotein if the residue after the N-terminal Cys is not an aspartate (The Asp acts as a targeting signal to indicate that the lipoprotein should stay in the inner membrane). The polypeptide is Outer-membrane lipoprotein carrier protein (Aliivibrio fischeri (strain MJ11) (Vibrio fischeri)).